A 352-amino-acid chain; its full sequence is Protein Wnt-3a (352 aa).

Residues 1–18 (MGCFGYLLLIIGLHQVLA) form the signal peptide. 9 disulfides stabilise this stretch: Cys-77-Cys-88, Cys-128-Cys-136, Cys-138-Cys-155, Cys-203-Cys-217, Cys-205-Cys-212, Cys-297-Cys-312, Cys-327-Cys-342, Cys-329-Cys-339, and Cys-334-Cys-335. An N-linked (GlcNAc...) asparagine glycan is attached at Asn-87. Residue Ser-209 is the site of O-palmitoleoyl serine attachment. Residue Asn-298 is glycosylated (N-linked (GlcNAc...) asparagine).

This sequence belongs to the Wnt family. Post-translationally, disulfide bonds have critical and distinct roles in secretion and activity. Loss of each conserved cysteine results in high molecular weight oxidized Wnt oligomers, which are formed through inter-Wnt disulfide bonding. In terms of processing, palmitoleoylation is required for efficient binding to frizzled receptors. Depalmitoleoylation leads to Wnt signaling pathway inhibition. As to expression, at neurula in anterior neural fold; at tailbud in dorsal midline of midbrain.

Its subcellular location is the secreted. The protein resides in the extracellular space. The protein localises to the extracellular matrix. Its function is as follows. Ligand for members of the frizzled family of seven transmembrane receptors. Functions in the canonical Wnt signaling pathway that results in activation of transcription factors of the TCF/LEF family. Required for normal embryonic mesoderm development and formation of caudal somites. Required for normal morphogenesis of the developing neural tube. The polypeptide is Protein Wnt-3a (wnt3a) (Xenopus laevis (African clawed frog)).